The sequence spans 124 residues: Fluoride-specific ion channel FluC (124 aa).

4 consecutive transmembrane segments (helical) span residues 4-24, 32-52, 68-88, and 96-116; these read VIFI…LSGW, AFPY…GLIM, GLTI…YETF, and LLIA…FTWL. Gly75 and Thr78 together coordinate Na(+).

Belongs to the fluoride channel Fluc/FEX (TC 1.A.43) family.

It is found in the cell inner membrane. It catalyses the reaction fluoride(in) = fluoride(out). Its activity is regulated as follows. Na(+) is not transported, but it plays an essential structural role and its presence is essential for fluoride channel function. Functionally, fluoride-specific ion channel. Important for reducing fluoride concentration in the cell, thus reducing its toxicity. The protein is Fluoride-specific ion channel FluC of Geotalea daltonii (strain DSM 22248 / JCM 15807 / FRC-32) (Geobacter daltonii).